The chain runs to 313 residues: MSFSAHTKDELARIEGLPSCCRLAELAALAKLNGRLVHGPAELLIVTENAAIARKVFKALKMQFRLAARVEIRRKPRLKKNNEYLVRIGNQDGLGPALEEMGLCTVSLRVRPGLKRDLVRRECCRRSYLRGAFLARGSVSSPRGSYHLEITVGDQRMAADLSGLMRKVGLEGRLSPRKRGWIVYLKDGEQVADALKLMGAHAALLDFENARVYKDMRNRVNRLVNCDTANLGKTVSAGVRQEEHIRLVVQRFGLETLSPPLRQVARLRLQYPEVSLRELGELAQPPLSKSCVNHRLRKLEQIAEHILASRTRN.

A DNA-binding region (H-T-H motif) is located at residues 275–308 (SLRELGELAQPPLSKSCVNHRLRKLEQIAEHILA).

Belongs to the WhiA family.

In terms of biological role, involved in cell division and chromosome segregation. This chain is Probable cell division protein WhiA, found in Desulforudis audaxviator (strain MP104C).